Reading from the N-terminus, the 502-residue chain is Cytochrome P450 71B17 (502 aa).

A helical membrane pass occupies residues 1-21 (MAISLLCLFLITFVSLTIVGC). Cys-444 provides a ligand contact to heme.

This sequence belongs to the cytochrome P450 family. Requires heme as cofactor.

Its subcellular location is the membrane. The protein is Cytochrome P450 71B17 (CYP71B17) of Arabidopsis thaliana (Mouse-ear cress).